A 502-amino-acid chain; its full sequence is ATP synthase subunit alpha (502 aa).

A disordered region spans residues Val-115–Gly-135. Gly-169–Thr-176 provides a ligand contact to ATP.

This sequence belongs to the ATPase alpha/beta chains family. F-type ATPases have 2 components, CF(1) - the catalytic core - and CF(0) - the membrane proton channel. CF(1) has five subunits: alpha(3), beta(3), gamma(1), delta(1), epsilon(1). CF(0) has three main subunits: a(1), b(2) and c(9-12). The alpha and beta chains form an alternating ring which encloses part of the gamma chain. CF(1) is attached to CF(0) by a central stalk formed by the gamma and epsilon chains, while a peripheral stalk is formed by the delta and b chains.

The protein localises to the cell membrane. It carries out the reaction ATP + H2O + 4 H(+)(in) = ADP + phosphate + 5 H(+)(out). Its function is as follows. Produces ATP from ADP in the presence of a proton gradient across the membrane. The alpha chain is a regulatory subunit. This chain is ATP synthase subunit alpha, found in Bacillus anthracis (strain A0248).